The chain runs to 611 residues: Protein PES4 (611 aa).

Positions F37–K81 are disordered. Positions R45–S54 are enriched in basic and acidic residues. 4 RRM domains span residues V91–R169, T179–I247, N303–D379, and S393–Q471.

Its subcellular location is the nucleus. The sequence is that of Protein PES4 (PES4) from Saccharomyces cerevisiae (strain ATCC 204508 / S288c) (Baker's yeast).